We begin with the raw amino-acid sequence, 430 residues long: Glutamate-1-semialdehyde 2,1-aminomutase (430 aa).

At Lys-265 the chain carries N6-(pyridoxal phosphate)lysine.

The protein belongs to the class-III pyridoxal-phosphate-dependent aminotransferase family. HemL subfamily. Homodimer. Pyridoxal 5'-phosphate is required as a cofactor.

It localises to the cytoplasm. It carries out the reaction (S)-4-amino-5-oxopentanoate = 5-aminolevulinate. The protein operates within porphyrin-containing compound metabolism; protoporphyrin-IX biosynthesis; 5-aminolevulinate from L-glutamyl-tRNA(Glu): step 2/2. This is Glutamate-1-semialdehyde 2,1-aminomutase from Helicobacter pylori (strain Shi470).